The primary structure comprises 112 residues: Nitrogen regulatory protein P-II (112 aa).

Ser49 carries the post-translational modification Phosphoserine. Tyr51 carries the post-translational modification O-UMP-tyrosine.

This sequence belongs to the P(II) protein family. As to quaternary structure, homotrimer. In terms of processing, phosphorylation dependent on the nitrogen source and spectral light quality.

Functionally, P-II indirectly controls the transcription of the GS gene (glnA). P-II prevents NR-II-catalyzed conversion of NR-I to NR-I-phosphate, the transcriptional activator of glnA. When P-II is phosphorylated, these events are reversed. In nitrogen-limiting conditions, when the ratio of Gln to 2-ketoglutarate decreases, P-II is phosphorylated which allows the deadenylation of glutamine synthetase (GS), thus activating the enzyme. This Microchaete diplosiphon (Fremyella diplosiphon) protein is Nitrogen regulatory protein P-II (glnB).